Consider the following 182-residue polypeptide: Protein LIGHT-DEPENDENT SHORT HYPOCOTYLS 5 (182 aa).

Over residues 1–16 (MEGETAAKAAASSSSS) the composition is skewed to low complexity. 2 disordered regions span residues 1–22 (MEGETAAKAAASSSSSPSRYES) and 138–168 (ARGIPYDKKKRKRPHTDTATPIAGDGDDAEG). The ALOG domain maps to 19-147 (RYESQKRRDW…ARGIPYDKKK (129 aa)). Residues 145–149 (KKKRK) carry the Nuclear localization signal motif.

It belongs to the plant homeotic and developmental regulators ALOG protein family.

Its subcellular location is the nucleus. Functionally, probable transcription regulator that acts as a developmental regulator by promoting cell growth in response to light. The chain is Protein LIGHT-DEPENDENT SHORT HYPOCOTYLS 5 (LSH5) from Arabidopsis thaliana (Mouse-ear cress).